The primary structure comprises 188 residues: Elongation factor P (188 aa).

N6-(3,6-diaminohexanoyl)-5-hydroxylysine is present on lysine 34.

This sequence belongs to the elongation factor P family. Post-translationally, may be beta-lysylated on the epsilon-amino group of Lys-34 by the combined action of EpmA and EpmB, and then hydroxylated on the C5 position of the same residue by EpmC (if this protein is present). Lysylation is critical for the stimulatory effect of EF-P on peptide-bond formation. The lysylation moiety may extend toward the peptidyltransferase center and stabilize the terminal 3-CCA end of the tRNA. Hydroxylation of the C5 position on Lys-34 may allow additional potential stabilizing hydrogen-bond interactions with the P-tRNA.

It is found in the cytoplasm. It participates in protein biosynthesis; polypeptide chain elongation. Functionally, involved in peptide bond synthesis. Alleviates ribosome stalling that occurs when 3 or more consecutive Pro residues or the sequence PPG is present in a protein, possibly by augmenting the peptidyl transferase activity of the ribosome. Modification of Lys-34 is required for alleviation. This chain is Elongation factor P, found in Methylococcus capsulatus (strain ATCC 33009 / NCIMB 11132 / Bath).